The chain runs to 876 residues: SED5-binding protein 2 (876 aa).

Phosphoserine is present on Ser51. The zinc finger-like stretch occupies residues 164–189 (CRRCRSYMNPFVVFINQGRKWQCNIC). Residues 300–324 (VSDEDDEESDGEEEDEDEEEEDVDN) show a composition bias toward acidic residues. The tract at residues 300 to 326 (VSDEDDEESDGEEEDEDEEEEDVDNSE) is disordered.

It belongs to the SEC23/SEC24 family. SEC24 subfamily. As to quaternary structure, COPII is composed of at least five proteins: the SEC23/24 complex, the SEC13/31 complex and SAR1. Interacts with GRH1.

It is found in the cytoplasm. Its subcellular location is the golgi apparatus membrane. The protein resides in the endoplasmic reticulum membrane. In terms of biological role, component of the COPII coat, that covers ER-derived vesicles involved in transport from the endoplasmic reticulum to the Golgi apparatus. COPII acts in the cytoplasm to promote the transport of secretory, plasma membrane, and vacuolar proteins from the endoplasmic reticulum to the Golgi complex. This is SED5-binding protein 2 (SFB2) from Saccharomyces cerevisiae (strain ATCC 204508 / S288c) (Baker's yeast).